A 160-amino-acid polypeptide reads, in one-letter code: Phosphopantetheine adenylyltransferase (160 aa).

Residue Ser-10 coordinates substrate. ATP-binding positions include 10–11 (SF) and His-18. The substrate site is built by Lys-42, Thr-74, and Arg-88. ATP-binding positions include 89 to 91 (GLR), Glu-99, and 124 to 130 (YSFISST).

This sequence belongs to the bacterial CoaD family. Homohexamer. Mg(2+) is required as a cofactor.

It localises to the cytoplasm. It catalyses the reaction (R)-4'-phosphopantetheine + ATP + H(+) = 3'-dephospho-CoA + diphosphate. Its pathway is cofactor biosynthesis; coenzyme A biosynthesis; CoA from (R)-pantothenate: step 4/5. Reversibly transfers an adenylyl group from ATP to 4'-phosphopantetheine, yielding dephospho-CoA (dPCoA) and pyrophosphate. The chain is Phosphopantetheine adenylyltransferase from Leptospira interrogans serogroup Icterohaemorrhagiae serovar copenhageni (strain Fiocruz L1-130).